A 352-amino-acid polypeptide reads, in one-letter code: C-C chemokine receptor type 5 (352 aa).

Residues 1–30 (MDYQVSSPTYDIDYYTSEPCQKINVKQIAG) are Extracellular-facing. The residue at position 3 (Tyr3) is a Sulfotyrosine. Ser6 and Ser7 each carry an O-linked (GalNAc...) serine glycan. 3 positions are modified to sulfotyrosine: Tyr10, Tyr14, and Tyr15. Cystine bridges form between Cys20/Cys269 and Cys101/Cys178. Residues 31-58 (RLLPPLYSLVFIFGFVGNILVVLILINC) traverse the membrane as a helical segment. At 59–68 (KRLKSMTDIY) the chain is on the cytoplasmic side. A helical transmembrane segment spans residues 69–89 (LLNLAISDLLFLLTVPFWAHY). The Extracellular segment spans residues 90-102 (AAAQWDFGNTMCQ). Residues 103–124 (LLTGLYFIGFFSGIFFIILLTI) form a helical membrane-spanning segment. The Cytoplasmic segment spans residues 125 to 141 (DRYLAIVHAVFALKART). The chain crosses the membrane as a helical span at residues 142–166 (VTFGVVTSVITWVVAVFASLPGIIF). Topologically, residues 167–198 (TRSQREGLHYTCSSHFPYSQYQFWKNFQTLKI) are extracellular. The helical transmembrane segment at 199–218 (VILGLVLPLLVMVICYSGIL) threads the bilayer. The Cytoplasmic segment spans residues 219–235 (KTLLRCRNEKKRHRAVR). Residues 236 to 260 (LIFTIMIVYFLFWAPYNIVLLLNTF) traverse the membrane as a helical segment. The Extracellular segment spans residues 261–277 (QEFFGLNNCSSSNRLDQ). Residues 278–301 (AMQVTETLGMTHCCINPIIYAFVG) traverse the membrane as a helical segment. Topologically, residues 302 to 352 (EKFRNYLLVFFQKHIAKRFCKCCSIFQQEAPERASSVYTRSTGEQEISVGL) are cytoplasmic. 3 S-palmitoyl cysteine lipidation sites follow: Cys321, Cys323, and Cys324. Phosphoserine; by BARK1 occurs at positions 336, 337, 342, and 349.

The protein belongs to the G-protein coupled receptor 1 family. As to quaternary structure, interacts with PRAF2. Efficient ligand binding to CCL3/MIP-1alpha and CCL4/MIP-1beta requires sulfation, O-glycosylation and sialic acid modifications. Glycosylation on Ser-6 is required for efficient binding of CCL4. Interacts with GRK2. Interacts with ARRB1 and ARRB2. Interacts with CNIH4. Interacts with S100A4; this interaction stimulates T-lymphocyte chemotaxis. Sulfated on at least 2 of the N-terminal tyrosines. Sulfation is required for efficient binding of the chemokines, CCL3 and CCL4. Post-translationally, palmitoylation in the C-terminal is important for cell surface expression. In terms of processing, phosphorylation on serine residues in the C-terminal is stimulated by binding CC chemokines especially by APO-RANTES. O-glycosylated, but not N-glycosylated. Ser-6 appears to be the major site even if Ser-7 may be also O-glycosylated. Also sialylated glycans present which contribute to chemokine binding. Thr-16 and Ser-17 may also be glycosylated and, if so, with small moieties such as a T-antigen.

Its subcellular location is the cell membrane. Receptor for a number of inflammatory CC-chemokines including CCL3/MIP-1-alpha, CCL4/MIP-1-beta and RANTES and subsequently transduces a signal by increasing the intracellular calcium ion level. May play a role in the control of granulocytic lineage proliferation or differentiation. Participates in T-lymphocyte migration to the infection site by acting as a chemotactic receptor. This chain is C-C chemokine receptor type 5 (CCR5), found in Theropithecus gelada (Gelada baboon).